The following is a 341-amino-acid chain: Phosphate acyltransferase (341 aa).

Belongs to the PlsX family. In terms of assembly, homodimer. Probably interacts with PlsY.

Its subcellular location is the cytoplasm. It catalyses the reaction a fatty acyl-[ACP] + phosphate = an acyl phosphate + holo-[ACP]. Its pathway is lipid metabolism; phospholipid metabolism. Functionally, catalyzes the reversible formation of acyl-phosphate (acyl-PO(4)) from acyl-[acyl-carrier-protein] (acyl-ACP). This enzyme utilizes acyl-ACP as fatty acyl donor, but not acyl-CoA. This Aliivibrio salmonicida (strain LFI1238) (Vibrio salmonicida (strain LFI1238)) protein is Phosphate acyltransferase.